We begin with the raw amino-acid sequence, 425 residues long: MLDIKWIRENPEKLDKALVSRGLEPQAERLIQLDFARRSHVAKVQLAQERRNAVSKEIGQALAVSDEKMAERLRSEVEELKVFLSSATAEEKQLTESLEKILSALPNIPLDDVPEGKDESDNVVIRHFGLPPTFNFTPKEHFDLGQDLKQMNFERASRLSGTRFTVLSGALARLERALGQFMLDVHVNEHGYTEVSVPLLVRDEIVYGAAQLPKFAEDLFQTTDGRWLISTAEVPLTNLVNDEILEVSDLPLRFSSLSPCFRSEAGAAGRDTRGMLRQHQFWKVEMVSITSEEQSLMELERMTECAEDILKRLGLPFRTVVLSTGDMGFAARKTYDIEVWLPGQECYREISSCSVCGDFQGRRMNARYRKEGDKKLHFVHSLNGSGTAVGRCLIAVLENYQQADGSIIVPDVLQPYMGGMRCISA.

Position 231 to 233 (231 to 233 (TAE)) interacts with L-serine. Position 262–264 (262–264 (RSE)) interacts with ATP. Glu-285 serves as a coordination point for L-serine. 349 to 352 (EISS) contributes to the ATP binding site. Ser-385 lines the L-serine pocket.

This sequence belongs to the class-II aminoacyl-tRNA synthetase family. Type-1 seryl-tRNA synthetase subfamily. In terms of assembly, homodimer. The tRNA molecule binds across the dimer.

The protein localises to the cytoplasm. It carries out the reaction tRNA(Ser) + L-serine + ATP = L-seryl-tRNA(Ser) + AMP + diphosphate + H(+). The enzyme catalyses tRNA(Sec) + L-serine + ATP = L-seryl-tRNA(Sec) + AMP + diphosphate + H(+). It functions in the pathway aminoacyl-tRNA biosynthesis; selenocysteinyl-tRNA(Sec) biosynthesis; L-seryl-tRNA(Sec) from L-serine and tRNA(Sec): step 1/1. In terms of biological role, catalyzes the attachment of serine to tRNA(Ser). Is also able to aminoacylate tRNA(Sec) with serine, to form the misacylated tRNA L-seryl-tRNA(Sec), which will be further converted into selenocysteinyl-tRNA(Sec). The polypeptide is Serine--tRNA ligase (Bartonella tribocorum (strain CIP 105476 / IBS 506)).